The following is a 495-amino-acid chain: Probable plastidic glucose transporter 3 (495 aa).

12 consecutive transmembrane segments (helical) span residues 55–75, 97–117, 131–151, 154–174, 183–203, 214–234, 294–314, 330–350, 357–377, 384–404, 425–445, and 451–471; these read LPHVLVASLTSLLFGYHLGVV, LVVSTCLGGAFIGSLFSGLVA, LPMIVGASVSASTESLMGMLL, FLVGIGMGIGPSVTALYVTEV, YGSSTQIATCIGLLGSLFAGI, ICFWISTVPAAMLAVFMELCV, VVFIGSTLFALQQLSGINAVF, SANICVGVCNLLGSTVAVVLM, VLLIGSFAGMAVSLGLQAIAY, FGTLFLSVGGMLLFVLSFATG, ALAVCLAVHWVINFFVGLLFL, and LGSVLLNAIFGFFCVVAVIFV.

This sequence belongs to the major facilitator superfamily. Sugar transporter (TC 2.A.1.1) family.

It localises to the plastid. The protein localises to the chloroplast membrane. Its function is as follows. May be involved in the efflux of glucose towards the cytosol. The chain is Probable plastidic glucose transporter 3 from Arabidopsis thaliana (Mouse-ear cress).